The sequence spans 420 residues: Phosphoribosylamine--glycine ligase (420 aa).

The ATP-grasp domain occupies 108-314; that stretch reads KQFMEKYAIP…FAALIDALLH (207 aa). 134 to 195 contacts ATP; it reads LNERGVPIVI…EDFLAGEEFS (62 aa). Mg(2+) contacts are provided by E284 and N286.

The protein belongs to the GARS family. Mg(2+) serves as cofactor. It depends on Mn(2+) as a cofactor.

It catalyses the reaction 5-phospho-beta-D-ribosylamine + glycine + ATP = N(1)-(5-phospho-beta-D-ribosyl)glycinamide + ADP + phosphate + H(+). Its pathway is purine metabolism; IMP biosynthesis via de novo pathway; N(1)-(5-phospho-D-ribosyl)glycinamide from 5-phospho-alpha-D-ribose 1-diphosphate: step 2/2. In Listeria monocytogenes serovar 1/2a (strain ATCC BAA-679 / EGD-e), this protein is Phosphoribosylamine--glycine ligase.